Consider the following 752-residue polypeptide: Complement C2 (752 aa).

An N-terminal signal peptide occupies residues 1–20 (MGPLMVLFCLLFVYTGLADS). 3 Sushi domains span residues 22–86 (PSCP…VCKP), 87–146 (VRCP…VCDN), and 149–206 (GHCP…ICRQ). Cystine bridges form between C24–C64, C51–C84, C89–C131, C117–C144, C151–C191, and C177–C204. N-linked (GlcNAc...) asparagine glycosylation occurs at N29. The N-linked (GlcNAc...) asparagine glycan is linked to N112. The region spanning 254 to 452 (NLYLLLDCSQ…KALHQVFEHM (199 aa)) is the VWFA domain. Positions 260–264 (DCSQS) match the MIDAS-like motif motif. Positions 262 and 264 each coordinate Mg(2+). 2 N-linked (GlcNAc...) asparagine glycosylation sites follow: N290 and N333. T337 serves as a coordination point for Mg(2+). Intrachain disulfides connect C463-C581, C492-C508, and C584-C600. A Peptidase S1 domain is found at 464-744 (GVGNMSANAS…MQPWLRQHLG (281 aa)). 2 N-linked (GlcNAc...) asparagine glycosylation sites follow: N467 and N471. Active-site charge relay system residues include H507 and D561. N-linked (GlcNAc...) asparagine glycans are attached at residues N621 and N651. Intrachain disulfides connect C638–C665 and C675–C705. The Charge relay system role is filled by S679.

Belongs to the peptidase S1 family. In terms of assembly, serine protease component of the C3 convertase, also named C4bC2b, composed of the serine protease complement C2b and complement C4b. Serine protease component of the C5 convertase, also named C4bC2bC3b, composed of the serine protease complement C2b, complement C3b, as well as complement C4b. Mg(2+) serves as cofactor. Mn(2+) is required as a cofactor. Post-translationally, cleaved and activated by different proteases depending on the complement pathway to generate complement C2a and serine protease complement C2b chains. Cleaved and activated by C1S following activation by the classical complement system. Cleaved and activated by MASP2 following activation by the lectin complement system. Cleaved and activated by GZMK following activation by the GZMK complement system.

The protein localises to the secreted. It localises to the cell surface. The catalysed reaction is Selective cleavage of Arg-|-Ser bond in complement component C3 alpha-chain to form C3a and C3b, and Arg-|-Xaa bond in complement component C5 alpha-chain to form C5a and C5b.. In terms of biological role, precursor of the catalytic component of the C3 and C5 convertase complexes, which are part of the complement pathway, a cascade of proteins that leads to phagocytosis and breakdown of pathogens and signaling that strengthens the adaptive immune system. Component C2 is part of the classical, lectin and GZMK complement systems. Its function is as follows. Catalytic component of the complement C3 and C5 convertase complexes. Following complement activation, recruited to the surface of pathogens by complement C4b opsonin to form the C3 convertase, or C3b and C4b opsonins to form the C5 convertase. As part of the C3 convertase, cleaves and activate C3 into C3a anaphylatoxin and C3b opsonin, the next components of the complement pathways. As part of the C5 convertase, cleaves and activate C5 into C5a anaphylatoxin and C5b component of the membrane attack complex. This Gorilla gorilla gorilla (Western lowland gorilla) protein is Complement C2.